Reading from the N-terminus, the 139-residue chain is CLAVATA3/ESR (CLE)-related protein 1 (139 aa).

A signal peptide spans 1–22; sequence MPNIFKILLIVLLAVVSFRLSA. Residues 23-90 form a required for secretion from the host cytoplasm to the host apoplasm region; sequence STGDKKTAND…VPSHLTNRSM (68 aa). N-linked (GlcNAc...) asparagine glycans are attached at residues N37 and N87. The tract at residues 66–139 is disordered; the sequence is AIGRSNAQGG…SPSGPDPHHH (74 aa). Residues 100–125 are a coiled coil; that stretch reads EKGAATRVEKMRAQLRELAEKMTDKD. Over residues 106–128 the composition is skewed to basic and acidic residues; sequence RVEKMRAQLRELAEKMTDKDPKR. The CLE signature appears at 128–139; that stretch reads RLSPSGPDPHHH.

Belongs to the CLV3/ESR signal peptide family. As to expression, highly expressed exclusively within the dorsal esophageal gland cell during syncytium formation in host plants (at protein level).

The protein resides in the secreted. It is found in the host cytoplasm. The protein localises to the host extracellular space. It localises to the extracellular space. Its subcellular location is the apoplast. Mimics host plant CLE extracellular signal peptides that regulate cell fate. May play a role in the differentiation or division of feeding cells (syncytia) induced in plant roots during infection. This chain is CLAVATA3/ESR (CLE)-related protein 1 (CLE1), found in Heterodera glycines (Soybean cyst nematode worm).